The sequence spans 638 residues: Protein disulfide-isomerase A4 (638 aa).

Residues 1-20 (MKLRKAWLLVLLLALTQLLA) form the signal peptide. Thioredoxin domains follow at residues 21–162 (AASA…EVSQ) and 162–294 (QPDW…EFLK). The interval 24 to 50 (AGDAHEDTSDTENATEEEEEEDDDDLE) is disordered. The span at 32–50 (SDTENATEEEEEEDDDDLE) shows a compositional bias: acidic residues. Residue asparagine 36 is glycosylated (N-linked (GlcNAc...) asparagine). A CXXC motif is present at residues 84–87 (CGHC). 2 disulfides stabilise this stretch: cysteine 84-cysteine 87 and cysteine 199-cysteine 202. Residue lysine 359 is modified to N6-acetyllysine. Positions 498–629 (FKKGKLKPVI…LSKFIDEHAT (132 aa)) constitute a Thioredoxin 3 domain. A CXXC motif is present at residues 548–551 (CGHC). A disulfide bridge connects residues cysteine 548 and cysteine 551. The short motif at 635–638 (KEEL) is the Prevents secretion from ER element.

The protein belongs to the protein disulfide isomerase family. As to quaternary structure, part of a large chaperone multiprotein complex comprising DNAJB11, HSP90B1, HSPA5, HYOU, PDIA2, PDIA4, PDIA6, PPIB, SDF2L1, UGGT1 and very small amounts of ERP29, but not, or at very low levels, CALR nor CANX. Component of a complex containing at least CRELD2, MANF, MATN3 and PDIA4.

It is found in the endoplasmic reticulum lumen. The protein localises to the melanosome. It catalyses the reaction Catalyzes the rearrangement of -S-S- bonds in proteins.. This Mus musculus (Mouse) protein is Protein disulfide-isomerase A4 (Pdia4).